Consider the following 1892-residue polypeptide: Plexin A3 (1892 aa).

A signal peptide spans 1–20; that stretch reads MRSLWLLVFSFSVLTGTNMA. The Sema domain occupies 21–509; the sequence is FPMILSERPE…SDKQVSRLPV (489 aa). Residues 21-1240 lie on the Extracellular side of the membrane; it reads FPMILSERPE…IYSDSTLTLP (1220 aa). Residue Asn-68 is glycosylated (N-linked (GlcNAc...) asparagine). Intrachain disulfides connect Cys-86-Cys-95, Cys-121-Cys-129, Cys-283-Cys-404, Cys-299-Cys-355, Cys-373-Cys-392, Cys-512-Cys-529, Cys-518-Cys-560, Cys-521-Cys-538, and Cys-532-Cys-544. Asn-569 is a glycosylation site (N-linked (GlcNAc...) asparagine). A disulfide bridge connects residues Cys-595 and Cys-615. 4 IPT/TIG domains span residues 861–955, 957–1041, 1044–1143, and 1146–1232; these read PRIT…YSFV, PSFS…YIYT, PNIS…FTYY, and PTFE…LHIY. A glycan (N-linked (GlcNAc...) asparagine) is linked at Asn-1183. A helical transmembrane segment spans residues 1241–1261; that stretch reads AIIGIGAGGGVLLIAIIAVLI. Residues 1262 to 1315 adopt a coiled-coil conformation; sequence AYKRKTRDADRTLKRLQLQMDNLESRVALECKEAFAELQTDIQELTNDMDGVKI. At 1262 to 1892 the chain is on the cytoplasmic side; that stretch reads AYKRKTRDAD…QAINLMSGSS (631 aa).

It belongs to the plexin family. In terms of tissue distribution, detected in primary motor neurons in the embryonic nervous system.

Its subcellular location is the cell membrane. Coreceptor for class 3 semaphorins. Necessary for signaling by class 3 semaphorins and subsequent remodeling of the cytoskeleton. Plays a role in axon guidance in the developing nervous system. Class 3 semaphorins bind to a complex composed of a neuropilin and a plexin. The plexin modulates the affinity of the complex for specific semaphorins, and its cytoplasmic domain is required for the activation of down-stream signaling events in the cytoplasm. The chain is Plexin A3 (plxna3) from Danio rerio (Zebrafish).